The primary structure comprises 166 residues: Large ribosomal subunit protein uL10 (166 aa).

Belongs to the universal ribosomal protein uL10 family. Part of the ribosomal stalk of the 50S ribosomal subunit. The N-terminus interacts with L11 and the large rRNA to form the base of the stalk. The C-terminus forms an elongated spine to which L12 dimers bind in a sequential fashion forming a multimeric L10(L12)X complex.

Forms part of the ribosomal stalk, playing a central role in the interaction of the ribosome with GTP-bound translation factors. The chain is Large ribosomal subunit protein uL10 from Streptococcus agalactiae serotype V (strain ATCC BAA-611 / 2603 V/R).